We begin with the raw amino-acid sequence, 340 residues long: Phenylalanine--tRNA ligase alpha subunit (340 aa).

Glu255 contributes to the Mg(2+) binding site.

Belongs to the class-II aminoacyl-tRNA synthetase family. Phe-tRNA synthetase alpha subunit type 1 subfamily. Tetramer of two alpha and two beta subunits. The cofactor is Mg(2+).

It localises to the cytoplasm. It carries out the reaction tRNA(Phe) + L-phenylalanine + ATP = L-phenylalanyl-tRNA(Phe) + AMP + diphosphate + H(+). The chain is Phenylalanine--tRNA ligase alpha subunit from Exiguobacterium sibiricum (strain DSM 17290 / CCUG 55495 / CIP 109462 / JCM 13490 / 255-15).